We begin with the raw amino-acid sequence, 161 residues long: 3-hydroxyacyl-[acyl-carrier-protein] dehydratase FabZ (161 aa).

Residue His-55 is part of the active site.

This sequence belongs to the thioester dehydratase family. FabZ subfamily.

Its subcellular location is the cytoplasm. It catalyses the reaction a (3R)-hydroxyacyl-[ACP] = a (2E)-enoyl-[ACP] + H2O. In terms of biological role, involved in unsaturated fatty acids biosynthesis. Catalyzes the dehydration of short chain beta-hydroxyacyl-ACPs and long chain saturated and unsaturated beta-hydroxyacyl-ACPs. The chain is 3-hydroxyacyl-[acyl-carrier-protein] dehydratase FabZ from Jannaschia sp. (strain CCS1).